The primary structure comprises 241 residues: Probable 2-phosphosulfolactate phosphatase (241 aa).

It belongs to the ComB family. The cofactor is Mg(2+).

It catalyses the reaction (2R)-O-phospho-3-sulfolactate + H2O = (2R)-3-sulfolactate + phosphate. The sequence is that of Probable 2-phosphosulfolactate phosphatase from Caldanaerobacter subterraneus subsp. tengcongensis (strain DSM 15242 / JCM 11007 / NBRC 100824 / MB4) (Thermoanaerobacter tengcongensis).